Reading from the N-terminus, the 74-residue chain is Translational regulator CsrA (74 aa).

This sequence belongs to the CsrA/RsmA family. In terms of assembly, homodimer; the beta-strands of each monomer intercalate to form a hydrophobic core, while the alpha-helices form wings that extend away from the core.

The protein localises to the cytoplasm. Functionally, a translational regulator that binds mRNA to regulate translation initiation and/or mRNA stability. Usually binds in the 5'-UTR at or near the Shine-Dalgarno sequence preventing ribosome-binding, thus repressing translation. Its main target seems to be the major flagellin gene, while its function is anatagonized by FliW. The polypeptide is Translational regulator CsrA (Bacillus velezensis (strain DSM 23117 / BGSC 10A6 / LMG 26770 / FZB42) (Bacillus amyloliquefaciens subsp. plantarum)).